We begin with the raw amino-acid sequence, 319 residues long: F-box only protein 8 (319 aa).

Residues 68-111 form the F-box domain; it reads FINLEMLPPELSFTILSYLNATDLCLASCVWQDLANDELLWQGL. The region spanning 146-276 is the SEC7 domain; that stretch reads FNANPDEGVN…LILLSIDLTS (131 aa).

Its function is as follows. May promote guanine-nucleotide exchange on an ARF. Promotes the activation of ARF through replacement of GDP with GTP (Potential). The chain is F-box only protein 8 (FBXO8) from Bos taurus (Bovine).